Consider the following 486-residue polypeptide: Protein nucleotidyltransferase YdiU (486 aa).

ATP contacts are provided by Gly-90, Gly-92, Arg-93, Lys-113, Asp-125, Gly-126, Arg-176, and Arg-183. The active-site Proton acceptor is Asp-252. Mg(2+)-binding residues include Asn-253 and Asp-262. Position 262 (Asp-262) interacts with ATP.

This sequence belongs to the SELO family. The cofactor is Mg(2+). Mn(2+) is required as a cofactor.

It catalyses the reaction L-seryl-[protein] + ATP = 3-O-(5'-adenylyl)-L-seryl-[protein] + diphosphate. The enzyme catalyses L-threonyl-[protein] + ATP = 3-O-(5'-adenylyl)-L-threonyl-[protein] + diphosphate. The catalysed reaction is L-tyrosyl-[protein] + ATP = O-(5'-adenylyl)-L-tyrosyl-[protein] + diphosphate. It carries out the reaction L-histidyl-[protein] + UTP = N(tele)-(5'-uridylyl)-L-histidyl-[protein] + diphosphate. It catalyses the reaction L-seryl-[protein] + UTP = O-(5'-uridylyl)-L-seryl-[protein] + diphosphate. The enzyme catalyses L-tyrosyl-[protein] + UTP = O-(5'-uridylyl)-L-tyrosyl-[protein] + diphosphate. In terms of biological role, nucleotidyltransferase involved in the post-translational modification of proteins. It can catalyze the addition of adenosine monophosphate (AMP) or uridine monophosphate (UMP) to a protein, resulting in modifications known as AMPylation and UMPylation. The sequence is that of Protein nucleotidyltransferase YdiU from Pseudomonas aeruginosa (strain UCBPP-PA14).